The sequence spans 88 residues: Class I hydrophobin F (88 aa).

The first 21 residues, 1–21, serve as a signal peptide directing secretion; it reads MLSRLFTVPAILLATLGSAAT. Intrachain disulfides connect Cys-30/Cys-67, Cys-34/Cys-58, Cys-35/Cys-51, and Cys-68/Cys-84.

Belongs to the fungal hydrophobin family.

It localises to the secreted. The protein resides in the cell wall. The protein localises to the vacuole. It is found in the cytoplasmic vesicle. Functionally, aerial growth, conidiation, and dispersal of filamentous fungi in the environment rely upon a capability of their secreting small amphipathic proteins called hydrophobins (HPBs) with low sequence identity. Class I can self-assemble into an outermost layer of rodlet bundles on aerial cell surfaces, conferring cellular hydrophobicity that supports fungal growth, development and dispersal; whereas Class II form highly ordered films at water-air interfaces through intermolecular interactions but contribute nothing to the rodlet structure. Hyd1F contributes to certain cell wall-related features, such as hydrophobicity but is not involved in cell wall-related events during fungal proliferation in host hemocoel. Does not contribute to conidial hydrophobicity. In Beauveria bassiana (strain ARSEF 2860) (White muscardine disease fungus), this protein is Class I hydrophobin F.